A 739-amino-acid polypeptide reads, in one-letter code: Cleavage and polyadenylation specificity factor subunit 2 (739 aa).

Basic and acidic residues predominate over residues 411–423 (VKEEETKASHGSD). Positions 411–430 (VKEEETKASHGSDDNSSEPM) are disordered.

It belongs to the metallo-beta-lactamase superfamily. RNA-metabolizing metallo-beta-lactamase-like family. CPSF2/YSH1 subfamily. Component of the CPSF complex, at least composed of CPSF160, CPSF100, CPSF73-I, CPSF73-II, CPSF30, FY and FIPS5. Forms a complex with cleavage and polyadenylation specificity factor (CPSF) subunits FY, PAPS2, CSTF50, CPSF30, CPSF73-I, CPSF73-II and CPSF160.

The protein resides in the nucleus. It is found in the cytoplasm. In terms of biological role, CPSF plays a key role in pre-mRNA 3'-end formation, recognizing the AAUAAA signal sequence and interacting with poly(A)polymerase and other factors to bring about cleavage and poly(A) addition. Required for antisense-RNA-mediated gene silencing. This chain is Cleavage and polyadenylation specificity factor subunit 2 (CPSF100), found in Arabidopsis thaliana (Mouse-ear cress).